The chain runs to 213 residues: Kynurenine formamidase (213 aa).

Tryptophan 18 is a binding site for substrate. Positions 48, 52, and 54 each coordinate Zn(2+). Histidine 58 serves as the catalytic Proton donor/acceptor. Histidine 160 and glutamate 172 together coordinate Zn(2+).

This sequence belongs to the Cyclase 1 superfamily. KynB family. In terms of assembly, homodimer. Requires Zn(2+) as cofactor.

It catalyses the reaction N-formyl-L-kynurenine + H2O = L-kynurenine + formate + H(+). It functions in the pathway amino-acid degradation; L-tryptophan degradation via kynurenine pathway; L-kynurenine from L-tryptophan: step 2/2. Catalyzes the hydrolysis of N-formyl-L-kynurenine to L-kynurenine, the second step in the kynurenine pathway of tryptophan degradation. The sequence is that of Kynurenine formamidase from Burkholderia vietnamiensis (strain G4 / LMG 22486) (Burkholderia cepacia (strain R1808)).